We begin with the raw amino-acid sequence, 225 residues long: Phosphoribosylformylglycinamidine synthase subunit PurQ (225 aa).

A Glutamine amidotransferase type-1 domain is found at 6–225 (FGVVVFPGSN…WQSILRSFAA (220 aa)). C89 serves as the catalytic Nucleophile. Catalysis depends on residues H198 and E200.

Part of the FGAM synthase complex composed of 1 PurL, 1 PurQ and 2 PurS subunits.

It localises to the cytoplasm. It catalyses the reaction N(2)-formyl-N(1)-(5-phospho-beta-D-ribosyl)glycinamide + L-glutamine + ATP + H2O = 2-formamido-N(1)-(5-O-phospho-beta-D-ribosyl)acetamidine + L-glutamate + ADP + phosphate + H(+). The catalysed reaction is L-glutamine + H2O = L-glutamate + NH4(+). It participates in purine metabolism; IMP biosynthesis via de novo pathway; 5-amino-1-(5-phospho-D-ribosyl)imidazole from N(2)-formyl-N(1)-(5-phospho-D-ribosyl)glycinamide: step 1/2. Functionally, part of the phosphoribosylformylglycinamidine synthase complex involved in the purines biosynthetic pathway. Catalyzes the ATP-dependent conversion of formylglycinamide ribonucleotide (FGAR) and glutamine to yield formylglycinamidine ribonucleotide (FGAM) and glutamate. The FGAM synthase complex is composed of three subunits. PurQ produces an ammonia molecule by converting glutamine to glutamate. PurL transfers the ammonia molecule to FGAR to form FGAM in an ATP-dependent manner. PurS interacts with PurQ and PurL and is thought to assist in the transfer of the ammonia molecule from PurQ to PurL. This Synechococcus sp. (strain JA-2-3B'a(2-13)) (Cyanobacteria bacterium Yellowstone B-Prime) protein is Phosphoribosylformylglycinamidine synthase subunit PurQ.